A 358-amino-acid chain; its full sequence is 3-isopropylmalate dehydrogenase (358 aa).

76-89 (GPRWDNLTGAERPE) serves as a coordination point for NAD(+). Positions 96, 106, 135, and 225 each coordinate substrate. The Mg(2+) site is built by Asp-225, Asp-249, and Asp-253. 283 to 295 (GSAPDIAGQNKAN) provides a ligand contact to NAD(+).

This sequence belongs to the isocitrate and isopropylmalate dehydrogenases family. LeuB type 1 subfamily. In terms of assembly, homodimer. It depends on Mg(2+) as a cofactor. Requires Mn(2+) as cofactor.

The protein resides in the cytoplasm. It catalyses the reaction (2R,3S)-3-isopropylmalate + NAD(+) = 4-methyl-2-oxopentanoate + CO2 + NADH. It functions in the pathway amino-acid biosynthesis; L-leucine biosynthesis; L-leucine from 3-methyl-2-oxobutanoate: step 3/4. In terms of biological role, catalyzes the oxidation of 3-carboxy-2-hydroxy-4-methylpentanoate (3-isopropylmalate) to 3-carboxy-4-methyl-2-oxopentanoate. The product decarboxylates to 4-methyl-2 oxopentanoate. The chain is 3-isopropylmalate dehydrogenase from Oleidesulfovibrio alaskensis (strain ATCC BAA-1058 / DSM 17464 / G20) (Desulfovibrio alaskensis).